The sequence spans 100 residues: MIREERLLKVILGPHISEKSTVLAEKNNTVVFRVAIDATKAEIKAAVAKLFEVEVDSVRTLVNKGKTKRTGGRVGRRIDWKKAYVTLAAGAEIDFVGGAE.

It belongs to the universal ribosomal protein uL23 family. In terms of assembly, part of the 50S ribosomal subunit. Contacts protein L29, and trigger factor when it is bound to the ribosome.

Functionally, one of the early assembly proteins it binds 23S rRNA. One of the proteins that surrounds the polypeptide exit tunnel on the outside of the ribosome. Forms the main docking site for trigger factor binding to the ribosome. The protein is Large ribosomal subunit protein uL23 of Shewanella frigidimarina (strain NCIMB 400).